The sequence spans 432 residues: Serine hydroxymethyltransferase (432 aa).

(6S)-5,6,7,8-tetrahydrofolate contacts are provided by residues L127 and 131 to 133; that span reads GHL. Position 236 is an N6-(pyridoxal phosphate)lysine (K236).

The protein belongs to the SHMT family. Homodimer. Requires pyridoxal 5'-phosphate as cofactor.

It localises to the cytoplasm. It catalyses the reaction (6R)-5,10-methylene-5,6,7,8-tetrahydrofolate + glycine + H2O = (6S)-5,6,7,8-tetrahydrofolate + L-serine. The protein operates within one-carbon metabolism; tetrahydrofolate interconversion. Its pathway is amino-acid biosynthesis; glycine biosynthesis; glycine from L-serine: step 1/1. Catalyzes the reversible interconversion of serine and glycine with tetrahydrofolate (THF) serving as the one-carbon carrier. This reaction serves as the major source of one-carbon groups required for the biosynthesis of purines, thymidylate, methionine, and other important biomolecules. Also exhibits THF-independent aldolase activity toward beta-hydroxyamino acids, producing glycine and aldehydes, via a retro-aldol mechanism. This chain is Serine hydroxymethyltransferase, found in Rhizobium johnstonii (strain DSM 114642 / LMG 32736 / 3841) (Rhizobium leguminosarum bv. viciae).